The chain runs to 402 residues: CCA-adding enzyme (402 aa).

Positions 32 and 35 each coordinate ATP. Residues Gly-32 and Arg-35 each contribute to the CTP site. Asp-45 and Asp-47 together coordinate Mg(2+). Residues Arg-116, Asp-159, Arg-162, Arg-165, and Arg-168 each contribute to the ATP site. Arg-116, Asp-159, Arg-162, Arg-165, and Arg-168 together coordinate CTP.

Belongs to the tRNA nucleotidyltransferase/poly(A) polymerase family. Bacterial CCA-adding enzyme type 3 subfamily. In terms of assembly, homodimer. Requires Mg(2+) as cofactor.

It catalyses the reaction a tRNA precursor + 2 CTP + ATP = a tRNA with a 3' CCA end + 3 diphosphate. The enzyme catalyses a tRNA with a 3' CCA end + 2 CTP + ATP = a tRNA with a 3' CCACCA end + 3 diphosphate. Functionally, catalyzes the addition and repair of the essential 3'-terminal CCA sequence in tRNAs without using a nucleic acid template. Adds these three nucleotides in the order of C, C, and A to the tRNA nucleotide-73, using CTP and ATP as substrates and producing inorganic pyrophosphate. tRNA 3'-terminal CCA addition is required both for tRNA processing and repair. Also involved in tRNA surveillance by mediating tandem CCA addition to generate a CCACCA at the 3' terminus of unstable tRNAs. While stable tRNAs receive only 3'-terminal CCA, unstable tRNAs are marked with CCACCA and rapidly degraded. This is CCA-adding enzyme from Streptococcus pyogenes serotype M4 (strain MGAS10750).